We begin with the raw amino-acid sequence, 1055 residues long: Focal adhesion kinase 1 (1055 aa).

Positions 1 to 29 are disordered; that stretch reads MAAAYLDPNLNHTPSSSTKTHLGTGTERS. N-acetylalanine is present on alanine 2. At tyrosine 5 the chain carries Phosphotyrosine. A compositionally biased stretch (polar residues) spans 10–27; that stretch reads LNHTPSSSTKTHLGTGTE. Position 13 is a phosphothreonine (threonine 13). Phosphoserine is present on residues serine 29 and serine 54. The 321-residue stretch at 35 to 355 folds into the FERM domain; the sequence is RVLKVFHYFE…GYCRLVNGAT (321 aa). Lysine 152 participates in a covalent cross-link: Glycyl lysine isopeptide (Lys-Gly) (interchain with G-Cter in SUMO). At tyrosine 397 the chain carries Phosphotyrosine; by autocatalysis. The residue at position 407 (tyrosine 407) is a Phosphotyrosine. Positions 422 to 680 constitute a Protein kinase domain; that stretch reads IELGRCIGEG…ELKAQLSTIL (259 aa). ATP-binding positions include 428–434, lysine 454, and 500–502; these read IGEGQFG and ELC. Aspartate 546 (proton acceptor) is an active-site residue. Residues tyrosine 570 and tyrosine 576 each carry the phosphotyrosine modification. Tyrosine 577 bears the Phosphotyrosine; by RET and SRC mark. The residue at position 580 (serine 580) is a Phosphoserine. Over residues 685 to 697 the composition is skewed to basic and acidic residues; sequence VQQEERMRMESRR. Disordered regions lie at residues 685-734 and 837-923; these read VQQE…PSPQ and VRLS…LDRS. The interaction with TGFB1I1 stretch occupies residues 707–1055; that stretch reads GSDEAPPKPS…LKMLGQTRPH (349 aa). A Phosphoserine modification is found at serine 722. Serine 732 bears the Phosphoserine; by CDK5 mark. Residues 837-849 show a composition bias toward basic and acidic residues; it reads VRLSRGSIDREDG. Residue serine 843 is modified to Phosphoserine. Tyrosine 861 is modified (phosphotyrosine). Residues 869-880 show a composition bias toward pro residues; that stretch reads PAAPPKKPPRPG. The span at 886 to 896 shows a compositional bias: polar residues; it reads SNLSSISSPAE. A Phosphoserine modification is found at serine 913. Positions 915–1055 are interaction with ARHGEF28; sequence PPTANLDRSN…LKMLGQTRPH (141 aa). A Phosphothreonine modification is found at threonine 917. Residue tyrosine 928 is modified to Phosphotyrosine.

Belongs to the protein kinase superfamily. Tyr protein kinase family. FAK subfamily. Interacts with GIT1. Component of a complex that contains at least FER, CTTN and PTK2/FAK1. Interacts with BMX. Interacts with STEAP4. Interacts with ZFYVE21. Interacts with ESR1. Interacts with PIK3R1 or PIK3R2. Interacts with FGR, FLT4 and RET. Interacts with EPHA2 in resting cells; activation of EPHA2 recruits PTPN11, leading to dephosphorylation of PTK2/FAK1 and dissociation of the complex. Interacts with EPHA1 (kinase activity-dependent). Interacts with P53/TP53. Interacts (via first Pro-rich region) with CAS family members (via SH3 domain), including BCAR1, BCAR3, and CASS4. Interacts with NEDD9 (via SH3 domain). Interacts with TGFB1I1. Interacts with SRC, GRB2 and GRB7. Interacts with ARHGEF28. Interacts with SHB. Part of a complex composed of THSD1, PTK2/FAK1, TLN1 and VCL. Interacts with PXN and TLN1. Interacts with SORBS1. Interacts with STAT1. Interacts with WASL. Interacts with ARHGAP26 and SHC1. Interacts with RB1CC1; this inhibits PTK2/FAK1 activity and activation of downstream signaling pathways. Interacts with ARHGEF7. Interacts with MDM2. Interacts with PIAS1. Interacts with DCC. Interacts with LPXN (via LD motif 3). Interacts with MISP. Interacts with EMP2; regulates PTK2 activation and localization. Interacts with DSCAM. Interacts with AMBRA1. Interacts (when tyrosine-phosphorylated) with tensin TNS1; the interaction is increased by phosphorylation of TNS1. Phosphorylated on tyrosine residues upon activation, e.g. upon integrin signaling. Tyr-397 is the major autophosphorylation site, but other kinases can also phosphorylate this residue. Phosphorylation at Tyr-397 promotes interaction with SRC and SRC family members, leading to phosphorylation at Tyr-576, Tyr-577 and at additional tyrosine residues. FGR promotes phosphorylation at Tyr-397 and Tyr-576. FER promotes phosphorylation at Tyr-577, Tyr-861 and Tyr-928, even when cells are not adherent. Tyr-397, Tyr-576 and Ser-722 are phosphorylated only when cells are adherent. Phosphorylation at Tyr-397 is important for interaction with BMX, PIK3R1 and SHC1. Phosphorylation at Tyr-928 is important for interaction with GRB2. Dephosphorylated by PTPN11; PTPN11 is recruited to PTK2 via EPHA2 (tyrosine phosphorylated). Microtubule-induced dephosphorylation at Tyr-397 is crucial for the induction of focal adhesion disassembly; this dephosphorylation could be catalyzed by PTPN11 and regulated by ZFYVE21. Phosphorylation on tyrosine residues is enhanced by NTN1. Post-translationally, sumoylated; this enhances autophosphorylation.

The protein localises to the cell junction. Its subcellular location is the focal adhesion. It localises to the cell membrane. It is found in the cytoplasm. The protein resides in the perinuclear region. The protein localises to the cell cortex. Its subcellular location is the cytoskeleton. It localises to the microtubule organizing center. It is found in the centrosome. The protein resides in the nucleus. The protein localises to the cilium basal body. The enzyme catalyses L-tyrosyl-[protein] + ATP = O-phospho-L-tyrosyl-[protein] + ADP + H(+). With respect to regulation, subject to autoinhibition, mediated by interactions between the FERM domain and the kinase domain. Activated by autophosphorylation at Tyr-397. This promotes interaction with SRC and phosphorylation at Tyr-576 and Tyr-577 in the kinase activation loop by SRC. Phosphorylation at Tyr-397, Tyr-576 and Tyr-577 is required for maximal kinase activity. In terms of biological role, non-receptor protein-tyrosine kinase that plays an essential role in regulating cell migration, adhesion, spreading, reorganization of the actin cytoskeleton, formation and disassembly of focal adhesions and cell protrusions, cell cycle progression, cell proliferation and apoptosis. Required for early embryonic development and placenta development. Required for embryonic angiogenesis, normal cardiomyocyte migration and proliferation, and normal heart development. Regulates axon growth and neuronal cell migration, axon branching and synapse formation; required for normal development of the nervous system. Plays a role in osteogenesis and differentiation of osteoblasts. Functions in integrin signal transduction, but also in signaling downstream of numerous growth factor receptors, G-protein coupled receptors (GPCR), EPHA2, netrin receptors and LDL receptors. Forms multisubunit signaling complexes with SRC and SRC family members upon activation; this leads to the phosphorylation of additional tyrosine residues, creating binding sites for scaffold proteins, effectors and substrates. Regulates numerous signaling pathways. Promotes activation of phosphatidylinositol 3-kinase and the AKT1 signaling cascade. Promotes activation of MAPK1/ERK2, MAPK3/ERK1 and the MAP kinase signaling cascade. Promotes localized and transient activation of guanine nucleotide exchange factors (GEFs) and GTPase-activating proteins (GAPs), and thereby modulates the activity of Rho family GTPases. Signaling via CAS family members mediates activation of RAC1. Phosphorylates NEDD9 following integrin stimulation. Recruits the ubiquitin ligase MDM2 to P53/TP53 in the nucleus, and thereby regulates P53/TP53 activity, P53/TP53 ubiquitination and proteasomal degradation. Phosphorylates SRC; this increases SRC kinase activity. Phosphorylates ACTN1, ARHGEF7, GRB7, RET and WASL. Promotes phosphorylation of PXN and STAT1; most likely PXN and STAT1 are phosphorylated by a SRC family kinase that is recruited to autophosphorylated PTK2/FAK1, rather than by PTK2/FAK1 itself. Promotes phosphorylation of BCAR1; GIT2 and SHC1; this requires both SRC and PTK2/FAK1. Promotes phosphorylation of BMX and PIK3R1. Functionally, does not contain a kinase domain and inhibits PTK2/FAK1 phosphorylation and signaling. Its enhanced expression can attenuate the nuclear accumulation of LPXN and limit its ability to enhance serum response factor (SRF)-dependent gene transcription. This chain is Focal adhesion kinase 1, found in Rattus norvegicus (Rat).